The chain runs to 129 residues: MAWISLILSLLALSSGAISQAVVTQESALTTSPGETVTLTCRSSTGAVTTSNYANWVQQKPDHLFTGLIGGTNNRAPGVPARFSGSLIGNKAALTITGAQTEDEAIYFCALWYSNHWVFGGGTKLTVLG.

Residues 1–19 form the signal peptide; the sequence is MAWISLILSLLALSSGAIS. A Pyrrolidone carboxylic acid modification is found at Gln20. The Ig-like domain occupies 20-125; the sequence is QAVVTQESAL…HWVFGGGTKL (106 aa).

The polypeptide is Ig lambda-1 chain V regions MOPC 104E/RPC20/J558/S104 (Mus musculus (Mouse)).